Reading from the N-terminus, the 270-residue chain is Mediator of RNA polymerase II transcription subunit 4 (270 aa).

The disordered stretch occupies residues 1–25 (MAAASSGEKEKERPGGGLGAAGGNS). An N-acetylalanine modification is found at Ala-2. Coiled-coil stretches lie at residues 24–48 (NSTR…IEML) and 90–131 (HHEM…AKEK). Ser-32 carries the post-translational modification Phosphoserine. The interval 231–270 (MLPPNHSHDFLLEPPGHNKENEDDVEVMSTDSSSSSSDSD) is disordered. Over residues 236-250 (HSHDFLLEPPGHNKE) the composition is skewed to basic and acidic residues. The segment covering 259 to 270 (STDSSSSSSDSD) has biased composition (low complexity).

The protein belongs to the Mediator complex subunit 4 family. In terms of assembly, component of the Mediator complex, which is composed of MED1, MED4, MED6, MED7, MED8, MED9, MED10, MED11, MED12, MED13, MED13L, MED14, MED15, MED16, MED17, MED18, MED19, MED20, MED21, MED22, MED23, MED24, MED25, MED26, MED27, MED29, MED30, MED31, CCNC, CDK8 and CDC2L6/CDK11. The MED12, MED13, CCNC and CDK8 subunits form a distinct module termed the CDK8 module. Mediator containing the CDK8 module is less active than Mediator lacking this module in supporting transcriptional activation. Individual preparations of the Mediator complex lacking one or more distinct subunits have been variously termed ARC, CRSP, DRIP, PC2, SMCC and TRAP.

It localises to the nucleus. Component of the Mediator complex, a coactivator involved in the regulated transcription of nearly all RNA polymerase II-dependent genes. Mediator functions as a bridge to convey information from gene-specific regulatory proteins to the basal RNA polymerase II transcription machinery. Mediator is recruited to promoters by direct interactions with regulatory proteins and serves as a scaffold for the assembly of a functional preinitiation complex with RNA polymerase II and the general transcription factors. The polypeptide is Mediator of RNA polymerase II transcription subunit 4 (MED4) (Bos taurus (Bovine)).